The following is a 723-amino-acid chain: LIM domain-binding protein 3 (723 aa).

The PDZ domain maps to Met-1–Lys-84. Phosphoserine is present on residues Ser-44, Ser-98, and Asp-112. 2 disordered regions span residues Ile-89–Glu-134 and Ser-164–Asn-193. Thr-119 carries the phosphothreonine modification. Phosphoserine occurs at positions 121 and 123. Ser-214 carries the post-translational modification Phosphoserine. At Arg-216 the chain carries Omega-N-methylarginine. 3 positions are modified to phosphoserine: Ser-220, Ser-251, and Asp-288. Disordered stretches follow at residues Gly-280–Thr-423 and Ser-436–Thr-525. An Omega-N-methylarginine modification is found at Ala-291. Positions Ala-309–Ala-376 are enriched in low complexity. At Ile-327 the chain carries Phosphoserine. Residue Ser-330 is modified to Omega-N-methylarginine. Residues Ser-436–Thr-466 are compositionally biased toward pro residues. The segment covering Asp-490–Thr-509 has biased composition (polar residues). Omega-N-methylarginine is present on residues Arg-512 and Arg-529. LIM zinc-binding domains follow at residues Pro-545–Ala-603, Pro-604–Thr-663, and Lys-664–Val-723.

As to quaternary structure, interacts via its LIM domains with various PKC isoforms. Interacts via its PDZ domain with the ACTN2 C-terminal region. Interacts with MYOZ1, MYOZ2 and MYOZ3. Expressed primarily in adult heart and skeletal muscle, and detected at lower levels in lung. Isoforms are expressed in a tissue-specific manner. Isoform 1, isoform 3 and isoform 5 are expressed in heart, whereas isoform 2, isoform 4 and isoform 6 are expressed in skeletal muscle.

The protein localises to the cytoplasm. It is found in the perinuclear region. The protein resides in the cell projection. Its subcellular location is the pseudopodium. It localises to the cytoskeleton. The protein localises to the myofibril. It is found in the sarcomere. The protein resides in the z line. In terms of biological role, may function as an adapter in striated muscle to couple protein kinase C-mediated signaling via its LIM domains to the cytoskeleton. The chain is LIM domain-binding protein 3 from Mus musculus (Mouse).